Here is a 572-residue protein sequence, read N- to C-terminus: Transmembrane glycoprotein NMB (572 aa).

The N-terminal stretch at 1–22 (MESLCGVLVFLLLAAGLPLQAA) is a signal peptide. The Extracellular portion of the chain corresponds to 23–500 (KRFRDVLGHE…DLGSPLRTVN (478 aa)). Residues Asn93, Asn134, Asn200, Asn249, Asn275, Asn296, Asn300, Asn306, and Asn312 are each glycosylated (N-linked (GlcNAc...) asparagine). The PKD domain maps to 251–338 (SDETFLRDLP…SPSSSTSPSP (88 aa)). The disordered stretch occupies residues 321–359 (GPCPSPTPSPSSSTSPSPASSPSPTLSTPSPSLMPTGHK). Residues 330–356 (PSSSTSPSPASSPSPTLSTPSPSLMPT) show a composition bias toward low complexity. N-linked (GlcNAc...) asparagine glycans are attached at residues Asn461 and Asn469. Residues 501–521 (GVLISIGCLAMFVTMVTILLY) form a helical membrane-spanning segment. The Cytoplasmic segment spans residues 522–572 (KKHKTYKPIGNCTRNVVKGKGLSVFLSHAKAPFSRGDREKDPLLQDKPWML). Ser544 carries the post-translational modification Phosphoserine. Positions 556–558 (RGD) match the Cell attachment site motif.

This sequence belongs to the PMEL/NMB family.

It localises to the cell membrane. It is found in the melanosome membrane. The protein resides in the early endosome membrane. Functionally, could be a melanogenic enzyme. In Rattus norvegicus (Rat), this protein is Transmembrane glycoprotein NMB (Gpnmb).